The primary structure comprises 282 residues: Biotin synthase (282 aa).

Positions 1–228 (MQEIFLCSIS…NARLMVAGGR (228 aa)) constitute a Radical SAM core domain. The [4Fe-4S] cluster site is built by Cys-17, Cys-21, and Cys-24. [2Fe-2S] cluster-binding residues include Cys-61, Cys-96, Cys-154, and Arg-221.

The protein belongs to the radical SAM superfamily. Biotin synthase family. In terms of assembly, homodimer. [4Fe-4S] cluster serves as cofactor. It depends on [2Fe-2S] cluster as a cofactor.

The enzyme catalyses (4R,5S)-dethiobiotin + (sulfur carrier)-SH + 2 reduced [2Fe-2S]-[ferredoxin] + 2 S-adenosyl-L-methionine = (sulfur carrier)-H + biotin + 2 5'-deoxyadenosine + 2 L-methionine + 2 oxidized [2Fe-2S]-[ferredoxin]. It participates in cofactor biosynthesis; biotin biosynthesis; biotin from 7,8-diaminononanoate: step 2/2. Functionally, catalyzes the conversion of dethiobiotin (DTB) to biotin by the insertion of a sulfur atom into dethiobiotin via a radical-based mechanism. The protein is Biotin synthase of Helicobacter pylori (strain HPAG1).